Reading from the N-terminus, the 371-residue chain is Spermatogenic leucine zipper protein 1 (371 aa).

Coiled coils occupy residues 96–148 and 177–289; these read EVSE…TVQD and FPHI…QKEE. The residue at position 98 (serine 98) is a Phosphoserine. Residues 110–120 are helix-loop-helix motif; it reads INKELVKKLLA. A basic motif region spans residues 121 to 188; it reads SLDLGKKENA…HIQEENIRLR (68 aa). Serine 202 bears the Phosphoserine mark. Over residues 223–240 the composition is skewed to polar residues; that stretch reads KTLKNNGTHSPTQTNNES. A disordered region spans residues 223-246; the sequence is KTLKNNGTHSPTQTNNESAKQELE. The leucine-zipper stretch occupies residues 245–266; it reads LEEQVKRLKEDTYSLHLIATLL.

Post-translationally, phosphorylated by MAPK1/ERK2 and MAPK3/ERK1.

Its subcellular location is the cytoplasm. The protein resides in the nucleus. Transcription factor that binds to the DNA sequence 5'-CANNTG-3'(E box) and the G-box motif. May play an important role in the regulation of cell proliferation and differentiation during spermatogenesis. The polypeptide is Spermatogenic leucine zipper protein 1 (SPZ1) (Bos taurus (Bovine)).